The chain runs to 244 residues: Non-structural protein 3 (244 aa).

It belongs to the aquareoviridae NS3 protein family.

In Notemigonus crysoleucas (Golden shiner), this protein is Non-structural protein 3 (S11).